Consider the following 256-residue polypeptide: ATP synthase peripheral stalk subunit b, mitochondrial (256 aa).

A mitochondrion-targeting transit peptide spans Met-1–Ala-42. Lys-131 is modified (N6-succinyllysine). An N6-acetyllysine mark is found at Lys-139, Lys-154, Lys-162, Lys-221, Lys-225, Lys-233, and Lys-244.

It belongs to the eukaryotic ATPase B chain family. Component of the ATP synthase complex composed at least of ATP5F1A/subunit alpha, ATP5F1B/subunit beta, ATP5MC1/subunit c (homooctomer), MT-ATP6/subunit a, MT-ATP8/subunit 8, ATP5ME/subunit e, ATP5MF/subunit f, ATP5MG/subunit g, ATP5MK/subunit k, ATP5MJ/subunit j, ATP5F1C/subunit gamma, ATP5F1D/subunit delta, ATP5F1E/subunit epsilon, ATP5PF/subunit F6, ATP5PB/subunit b, ATP5PD/subunit d, ATP5PO/subunit OSCP. ATP synthase complex consists of a soluble F(1) head domain (subunits alpha(3) and beta(3)) - the catalytic core - and a membrane F(0) domain - the membrane proton channel (subunits c, a, 8, e, f, g, k and j). These two domains are linked by a central stalk (subunits gamma, delta, and epsilon) rotating inside the F1 region and a stationary peripheral stalk (subunits F6, b, d, and OSCP).

Its subcellular location is the mitochondrion. The protein localises to the mitochondrion inner membrane. Subunit b, of the mitochondrial membrane ATP synthase complex (F(1)F(0) ATP synthase or Complex V) that produces ATP from ADP in the presence of a proton gradient across the membrane which is generated by electron transport complexes of the respiratory chain. ATP synthase complex consist of a soluble F(1) head domain - the catalytic core - and a membrane F(1) domain - the membrane proton channel. These two domains are linked by a central stalk rotating inside the F(1) region and a stationary peripheral stalk. During catalysis, ATP synthesis in the catalytic domain of F(1) is coupled via a rotary mechanism of the central stalk subunits to proton translocation. In vivo, can only synthesize ATP although its ATP hydrolase activity can be activated artificially in vitro. Part of the complex F(0) domain. Part of the complex F(0) domain and the peripheric stalk, which acts as a stator to hold the catalytic alpha(3)beta(3) subcomplex and subunit a/ATP6 static relative to the rotary elements. This chain is ATP synthase peripheral stalk subunit b, mitochondrial, found in Mus musculus (Mouse).